A 181-amino-acid chain; its full sequence is Cyclic AMP-dependent transcription factor ATF-3 (181 aa).

Residue Lys78 forms a Glycyl lysine isopeptide (Lys-Gly) (interchain with G-Cter in SUMO2) linkage. Positions 86-149 (DERKKRRRER…QHLIYMLNLH (64 aa)) constitute a bZIP domain. The basic motif stretch occupies residues 88 to 110 (RKKRRRERNKIAAAKCRNKKKEK). Residues 114 to 142 (LQKESEKLESVNAELKAQIEELKNEKQHL) are leucine-zipper. At Thr162 the chain carries Phosphothreonine. A Glycyl lysine isopeptide (Lys-Gly) (interchain with G-Cter in SUMO2) cross-link involves residue Lys175.

The protein belongs to the bZIP family. ATF subfamily. In terms of assembly, binds DNA as a homodimer or a heterodimer. Interacts with KAT5; promoting KAT5 autoacetylation and KAT5 deubiquitination by USP7.

The protein resides in the nucleus. In terms of biological role, this protein binds the cAMP response element (CRE) (consensus: 5'-GTGACGT[AC][AG]-3'), a sequence present in many viral and cellular promoters. Represses transcription from promoters with ATF sites. It may repress transcription by stabilizing the binding of inhibitory cofactors at the promoter. Functionally, activates transcription presumably by sequestering inhibitory cofactors away from the promoters. Stress-induced isoform, counteracts the transcriptional repression of isoform 1. This chain is Cyclic AMP-dependent transcription factor ATF-3, found in Homo sapiens (Human).